A 131-amino-acid chain; its full sequence is Glycine cleavage system H protein (131 aa).

The Lipoyl-binding domain occupies 24–106 (TVRVGITDYA…YGEGWLVELQ (83 aa)). N6-lipoyllysine is present on Lys65.

This sequence belongs to the GcvH family. As to quaternary structure, the glycine cleavage system is composed of four proteins: P, T, L and H. The cofactor is (R)-lipoate.

Its function is as follows. The glycine cleavage system catalyzes the degradation of glycine. The H protein shuttles the methylamine group of glycine from the P protein to the T protein. The polypeptide is Glycine cleavage system H protein (Mycolicibacterium gilvum (strain PYR-GCK) (Mycobacterium gilvum (strain PYR-GCK))).